The sequence spans 393 residues: E3 ubiquitin-protein transferase RMND5B (393 aa).

Residue M1 is modified to N-acetylmethionine. The LisH domain maps to 116 to 148 (QQQILQMAIVEHLYQQGMLSVAEELCQESTLNV). A CTLH domain is found at 155 to 212 (PFLELNRILEALHEQDLGPALEWAVSHRQRLLELNSSLEFKLHRLHFIRLLAGGPEKQ). The RING-Gid-type zinc-finger motif lies at 338–379 (CPILRQQTSDSNPPIKLICGHVISRDALNKLINGGKLKCPYC).

In terms of assembly, identified in the CTLH complex that contains GID4, RANBP9 and/or RANBP10, MKLN1, MAEA, RMND5A (or alternatively its paralog RMND5B), GID8, ARMC8, WDR26 and YPEL5. Within this complex, MAEA, RMND5A (or alternatively its paralog RMND5B), GID8, WDR26, and RANBP9 and/or RANBP10 form the catalytic core, while GID4, MKLN1, ARMC8 and YPEL5 have ancillary roles.

Its subcellular location is the cytoplasm. The protein resides in the cytosol. The enzyme catalyses S-ubiquitinyl-[E2 ubiquitin-conjugating enzyme]-L-cysteine + [acceptor protein]-L-lysine = [E2 ubiquitin-conjugating enzyme]-L-cysteine + N(6)-ubiquitinyl-[acceptor protein]-L-lysine.. In terms of biological role, core component of the CTLH E3 ubiquitin-protein ligase complex that selectively accepts ubiquitin from UBE2H and mediates ubiquitination and subsequent proteasomal degradation of the transcription factor HBP1. MAEA and RMND5A are both required for catalytic activity of the CTLH E3 ubiquitin-protein ligase complex. Catalytic activity of the complex is required for normal cell proliferation. The CTLH E3 ubiquitin-protein ligase complex is not required for the degradation of enzymes involved in gluconeogenesis, such as FBP1. This Mus musculus (Mouse) protein is E3 ubiquitin-protein transferase RMND5B (Rmnd5b).